The primary structure comprises 176 residues: Large ribosomal subunit protein uL6 (176 aa).

This sequence belongs to the universal ribosomal protein uL6 family. In terms of assembly, part of the 50S ribosomal subunit.

Functionally, this protein binds to the 23S rRNA, and is important in its secondary structure. It is located near the subunit interface in the base of the L7/L12 stalk, and near the tRNA binding site of the peptidyltransferase center. In Paraburkholderia xenovorans (strain LB400), this protein is Large ribosomal subunit protein uL6.